The primary structure comprises 417 residues: Candidapepsin-4 (417 aa).

Residues 1–18 (MFLQNILSVLAFALLIDA) form the signal peptide. The propeptide at 19–75 (APVKRSTGFVTLDFNVKRSLVDPKDPTVEVKRSPLFLDIEPTEIPVDDTGRNDVGKR) is activation peptide. One can recognise a Peptidase A1 domain in the interval 89-403 (YSADITIGSN…DLDDRKISMA (315 aa)). Residue aspartate 107 is part of the active site. The cysteines at positions 122 and 134 are disulfide-linked. The N-linked (GlcNAc...) asparagine glycan is linked to asparagine 137. Aspartate 293 is a catalytic residue. Cysteine 331 and cysteine 369 form a disulfide bridge.

This sequence belongs to the peptidase A1 family. O-glycosylated.

The protein resides in the secreted. The catalysed reaction is Preferential cleavage at the carboxyl of hydrophobic amino acids, but fails to cleave 15-Leu-|-Tyr-16, 16-Tyr-|-Leu-17 and 24-Phe-|-Phe-25 of insulin B chain. Activates trypsinogen, and degrades keratin.. The chain is Candidapepsin-4 (SAP4) from Candida albicans (strain WO-1) (Yeast).